The primary structure comprises 56 residues: Small ribosomal subunit protein uS14z/uS14y/uS14x (56 aa).

Positions 21, 24, 39, and 42 each coordinate Zn(2+).

This sequence belongs to the universal ribosomal protein uS14 family. Requires Zn(2+) as cofactor.

In Arabidopsis thaliana (Mouse-ear cress), this protein is Small ribosomal subunit protein uS14z/uS14y/uS14x (RPS29A).